Consider the following 442-residue polypeptide: D-serine dehydratase (442 aa).

K118 bears the N6-(pyridoxal phosphate)lysine mark.

Belongs to the serine/threonine dehydratase family. DsdA subfamily. Monomer. It depends on pyridoxal 5'-phosphate as a cofactor.

The catalysed reaction is D-serine = pyruvate + NH4(+). In Shigella dysenteriae serotype 1 (strain Sd197), this protein is D-serine dehydratase.